We begin with the raw amino-acid sequence, 629 residues long: Polyadenylate-binding protein 2 (629 aa).

Over residues 1 to 12 (MAQVQLQGQTPN) the composition is skewed to polar residues. The segment at 1–25 (MAQVQLQGQTPNGSTAAVTSAPATS) is disordered. The segment covering 13–25 (GSTAAVTSAPATS) has biased composition (low complexity). 4 consecutive RRM domains span residues 36–114 (TSLY…YSHR), 124–201 (GNIF…PFLR), 215–292 (TNVY…RAQK), and 318–395 (SNLY…IAQR). The interval 480–507 (PQQQRPGGGRRPGGIQHSQQQNPMMQQQ) is disordered. The segment covering 492 to 507 (GGIQHSQQQNPMMQQQ) has biased composition (low complexity). In terms of domain architecture, PABC spans 539 to 616 (TIGALASNLS…AMDVLRSVAA (78 aa)).

The protein belongs to the polyadenylate-binding protein type-1 family. Interacts with eIF-iso4G. Interacts with ERD15/CID1 and CID7. Interacts with Turnip mosaic virus (TuMV) VPg-Pro and RNA-dependent RNA polymerase (RdRp). In terms of tissue distribution, expressed in all organs (at the protein level) but under distinct spatial and temporal regulation within each organ.

It is found in the cytoplasm. Its subcellular location is the nucleus. Its function is as follows. Binds the poly(A) tail of mRNA. Appears to be an important mediator of the multiple roles of the poly(A) tail in mRNA biogenesis, stability and translation. In the cytoplasm, affects both translation and mRNA decay. Stimulates translation by interaction with translation initiation factor eIF4G, a subunit of the cap-binding complex eIF4F, bringing the 5'- and 3'-ends of the mRNA in proximity. The formation of this circular mRNP structure appears to be critical for the synergistic effects of the cap and the poly(A) tail in facilitating translation initiation, recycling of ribosomes, and mRNA stability. During infection with potyvirus TuMV, acts as a potential integral component of the viral replicase complex that could play an important role in the regulation of potyviral RNA-dependent RNA polymerase (RdRp). Binds to uridylated mRNAs and determines the size of uridine extensions. Limits uridine extension by URT1, likely by binding to the oligo(A) tail and preventing URT1 access. The protein is Polyadenylate-binding protein 2 (PAB2) of Arabidopsis thaliana (Mouse-ear cress).